A 128-amino-acid chain; its full sequence is UPF0325 protein PMI2289 (128 aa).

The protein belongs to the UPF0325 family.

The chain is UPF0325 protein PMI2289 from Proteus mirabilis (strain HI4320).